The chain runs to 318 residues: MNGSWITILSLLVISQLASSKVTLIGKNTFLSFDDVEANFTPVVRRSGEYGLLYAAEPLDACSYLTNMAEKGSKFRPSYVLIVRGGCSFEEKIRNAQEAGYKAAIVYNDRYEELLVRMAGNSSGVYIHGVLVTRTSGEVLKEYTSRAEMELLLIPGFGISSWSIMAITFVSLLVISAVLASYFSVRRHRIRQHVRDLHHGGQGHSRMPKDLLQSMPTEVYTGVLEEGSTSVTCAICIDDYRVGEILRILPCKHKYHAVCIDSWLGRCRSFCPVCKQNPRTGNDVPPASETTPLISPGPNSITSLQSFYDLPIVVRVYL.

The signal sequence occupies residues 1-20 (MNGSWITILSLLVISQLASS). At 22 to 162 (VTLIGKNTFL…LIPGFGISSW (141 aa)) the chain is on the lumenal side. Cysteine 62 and cysteine 87 are joined by a disulfide. A PA domain is found at 70–143 (EKGSKFRPSY…RTSGEVLKEY (74 aa)). Asparagine 121 is a glycosylation site (N-linked (GlcNAc...) asparagine). The helical transmembrane segment at 163–183 (SIMAITFVSLLVISAVLASYF) threads the bilayer. The Cytoplasmic segment spans residues 184–318 (SVRRHRIRQH…DLPIVVRVYL (135 aa)). Residues 233 to 275 (CAICIDDYRVGEILRILPCKHKYHAVCIDSWLGRCRSFCPVCK) form an RING-type; atypical zinc finger.

The protein resides in the prevacuolar compartment membrane. It is found in the protein storage vacuole membrane. In terms of biological role, involved in the trafficking of vacuolar proteins. May function as a sorting receptor for protein trafficking to the protein storage vacuole (PSV). The protein is Receptor homology region, transmembrane domain- and RING domain-containing protein 6 (RMR6) of Arabidopsis thaliana (Mouse-ear cress).